A 70-amino-acid chain; its full sequence is Disintegrin triflavin (70 aa).

The 70-residue stretch at 1-70 (GEECDCGSPS…SADCPRWNGL (70 aa)) folds into the Disintegrin domain. 6 disulfides stabilise this stretch: C4/C19, C6/C14, C13/C36, C27/C33, C32/C57, and C45/C64. Positions 49–51 (RGD) match the Cell attachment site motif.

This sequence belongs to the venom metalloproteinase (M12B) family. P-II subfamily. P-IIa sub-subfamily. Monomer. In terms of tissue distribution, expressed by the venom gland.

It is found in the secreted. Inhibits fibrinogen interaction with platelets. Acts by binding to alpha-IIb/beta-3 (ITGA2B/ITGB3) on the platelet surface and inhibits aggregation induced by ADP, thrombin, platelet-activating factor and collagen. This is Disintegrin triflavin from Protobothrops flavoviridis (Habu).